Reading from the N-terminus, the 143-residue chain is uncharacterized protein (143 aa).

Cysteine 12 is a catalytic residue.

It belongs to the ArsC family.

This is an uncharacterized protein from Rhodospirillum rubrum.